The primary structure comprises 908 residues: UPF0182 protein NT01CX_0852 (908 aa).

The next 7 helical transmembrane spans lie at 8–28 (IGLFFCIALTVIFLKKIVNVI), 47–67 (FTSVISLFILVFLICFVAIKT), 96–116 (IINALTLIISLFIALNFSLGY), 157–177 (LLSLLILLAVITVIVYMFLNI), 209–229 (LAILGALLLLCISVGYLIKAW), 253–273 (FYIAISIVSIISSIIVAFSIL), and 280–300 (IISCVILIAVLVISERVVSGA).

This sequence belongs to the UPF0182 family.

Its subcellular location is the cell membrane. The polypeptide is UPF0182 protein NT01CX_0852 (Clostridium novyi (strain NT)).